The chain runs to 457 residues: PE-PGRS family protein PE_PGRS18 (457 aa).

One can recognise a PE domain in the interval 1-92 (MSFVNVAPQL…SSTYAVAEAA (92 aa)). NHL repeat units lie at residues 291-321 (FNDP…IDPV), 333-363 (NGPS…IDPN), 379-404 (GVAV…IDPA), and 419-447 (PTGV…ITGE).

Belongs to the mycobacterial PE family. PGRS subfamily.

The protein resides in the secreted. It localises to the cell wall. Enhances mycobacterial intracellular survival, probably via altering host macrophage cytokine profiling and attenuating the cell apoptosis. Could be required for host endothelial-cell invasion. In terms of biological role, expression in Mycobacterium smegmatis, a nonpathogenic species naturally deficient in PE_PGRS genes, results in alteration of the production of host cytokines, including IL-6, IL-1beta, IL-10 and IL-12p40, as well as enhanced survival within macrophages largely via attenuating the apoptosis of macrophages. This Mycobacterium tuberculosis (strain ATCC 25618 / H37Rv) protein is PE-PGRS family protein PE_PGRS18.